We begin with the raw amino-acid sequence, 194 residues long: Large ribosomal subunit protein bL9c (194 aa).

The transit peptide at 1-39 directs the protein to the chloroplast; it reads MASSTLSSLSSTPLQHSFAANLKTCSQFPNKSSGFMVFA.

This sequence belongs to the bacterial ribosomal protein bL9 family. In terms of assembly, part of the 50S ribosomal subunit.

It is found in the plastid. Its subcellular location is the chloroplast. Its function is as follows. Binds to the 23S rRNA. The sequence is that of Large ribosomal subunit protein bL9c (RPL9) from Pisum sativum (Garden pea).